Consider the following 677-residue polypeptide: Sulfate transporter 2.2 (677 aa).

The Cytoplasmic segment spans residues 1–110 (MQLSSLSHTS…QYKLNLFKKD (110 aa)). A helical membrane pass occupies residues 111 to 131 (LMAGLTLASLCIPQSIGYANL). Topologically, residues 132-133 (AG) are extracellular. The chain crosses the membrane as a helical span at residues 134–154 (LDPEYGLYTSVVPPLIYSTMG). At 155–158 (TSRE) the chain is on the cytoplasmic side. The helical transmembrane segment at 159-179 (LAIGPVAVVSLLLSSMVRDLQ) threads the bilayer. Over 180 to 190 (DPVTDPIAYRK) the chain is Extracellular. Residues 191–211 (IVFTVTFFAGAFQAIFGLFRL) form a helical membrane-spanning segment. At 212–213 (GF) the chain is on the cytoplasmic side. The chain crosses the membrane as a helical span at residues 214 to 234 (LVDFLSHAALVGFMAGAAIVI). Residues 235 to 270 (GLQQLKGLFGLTHFTNKTDVVSVLSSVFHSLHHPWQ) are Extracellular-facing. An N-linked (GlcNAc...) asparagine glycan is attached at N250. A helical membrane pass occupies residues 271-291 (PLNFVIGSSFLIFILLARFIG). Topologically, residues 292–296 (KRNNK) are cytoplasmic. The helical transmembrane segment at 297 to 317 (LFWIPAMAPLISVVLATLIVY) threads the bilayer. At 318-352 (LSNAESRGVKIVKHIKPGFNQLSVNQLQFKSPHLG) the chain is on the extracellular side. A helical membrane pass occupies residues 353–373 (QIAKIGLISAIIALTEAIAVG). The Cytoplasmic segment spans residues 374–389 (RSFATIKGYRLDGNKE). A helical transmembrane segment spans residues 390–410 (MMAMGFMNIAGSLSSCYVATG). At 411-422 (SFSRTAVNFSAG) the chain is on the extracellular side. Residue N418 is glycosylated (N-linked (GlcNAc...) asparagine). Residues 423–443 (CETVVSNIVMAITVMISLEVL) traverse the membrane as a helical segment. The Cytoplasmic segment spans residues 444-446 (TRF). A helical transmembrane segment spans residues 447-467 (LYFTPTAILASIILSALPGLI). Residues 468 to 482 (DVSGALHIWKLDKLD) lie on the Extracellular side of the membrane. The chain crosses the membrane as a helical span at residues 483 to 503 (FLVLIAAFFGVLFASVEIGLL). At 504-677 (LAVGISFARI…RARSTSHELC (174 aa)) the chain is on the cytoplasmic side. Residues 540–666 (YPMANKTAGL…MTVGEAVDIY (127 aa)) form the STAS domain.

This sequence belongs to the SLC26A/SulP transporter (TC 2.A.53) family. In terms of tissue distribution, expressed in the phloem in roots and in the phloem of vascular bundles in leaves.

The protein resides in the membrane. In terms of biological role, low-affinity H(+)/sulfate cotransporter that may be involved in the distribution of sulfate from vascular bundles to the palisade cells of the leaves. Plays a central role in the regulation of sulfate assimilation. This chain is Sulfate transporter 2.2 (SULTR2;2), found in Arabidopsis thaliana (Mouse-ear cress).